A 335-amino-acid chain; its full sequence is Probable UDP-N-acetylglucosamine pyrophosphorylase (335 aa).

The short motif at Leu-45–Gly-48 is the Substrate binding element. UTP contacts are provided by residues Leu-45–Gly-48, Lys-59, Gln-120, and Gly-145. Asn-146 contacts substrate. Asp-170 is a binding site for UTP. A Substrate binding motif is present at residues Glu-218 to Tyr-219. Position 278 (Lys-278) interacts with UTP. A substrate-binding site is contributed by Lys-308.

Belongs to the UDPGP type 1 family.

It is found in the cytoplasm. It catalyses the reaction N-acetyl-alpha-D-glucosamine 1-phosphate + UTP + H(+) = UDP-N-acetyl-alpha-D-glucosamine + diphosphate. It functions in the pathway nucleotide-sugar biosynthesis; UDP-N-acetyl-alpha-D-glucosamine biosynthesis; UDP-N-acetyl-alpha-D-glucosamine from N-acetyl-alpha-D-glucosamine 1-phosphate: step 1/1. In Encephalitozoon cuniculi (strain GB-M1) (Microsporidian parasite), this protein is Probable UDP-N-acetylglucosamine pyrophosphorylase (UAP1).